Here is an 89-residue protein sequence, read N- to C-terminus: Large ribosomal subunit protein bL27 (89 aa).

The tract at residues 1-22 is disordered; that stretch reads MAHKKAGGSSRNGRDSAGRRLG.

The protein belongs to the bacterial ribosomal protein bL27 family.

The sequence is that of Large ribosomal subunit protein bL27 from Dinoroseobacter shibae (strain DSM 16493 / NCIMB 14021 / DFL 12).